A 441-amino-acid chain; its full sequence is Chromosome partition protein MukF (441 aa).

Residues 208–236 (LDETSGNLRELQDTLNAAGDKLQAQLLRI) are leucine-zipper.

The protein belongs to the MukF family. In terms of assembly, interacts, and probably forms a ternary complex, with MukE and MukB via its C-terminal region. The complex formation is stimulated by calcium or magnesium. It is required for an interaction between MukE and MukB.

The protein resides in the cytoplasm. It is found in the nucleoid. Its function is as follows. Involved in chromosome condensation, segregation and cell cycle progression. May participate in facilitating chromosome segregation by condensation DNA from both sides of a centrally located replisome during cell division. Not required for mini-F plasmid partitioning. Probably acts via its interaction with MukB and MukE. Overexpression results in anucleate cells. It has a calcium binding activity. The protein is Chromosome partition protein MukF of Pasteurella multocida (strain Pm70).